The following is a 116-amino-acid chain: Bacterial microcompartment shell protein CutR (116 aa).

In terms of domain architecture, BMC circularly permuted spans 10–108; the sequence is RIIQESVPGK…LEYFKNSLGF (99 aa).

This sequence belongs to the EutS/PduU family. As to quaternary structure, has been crystallized in 5 structures (all are mutated, 3 have an N-terminal His-tag), most are homohexameric with a central pore. In two the homohexamer lies flat with a beta-barrel on the flat face created by the protruding N termini of the six chains. In 2 others the hexamer is not flat but has a six-fold screw axis; the screw pitch is 33.8 or 41.9 Angstroms depending on the structure. Interacts with the BMC major shell protein.

The protein resides in the bacterial microcompartment. It participates in amine and polyamine metabolism; choline degradation. Its function is as follows. A minor shell protein of the choline degradation-specific bacterial microcompartment (BMC). Proteins such as this one with circularly permuted BMC domains may play a key role in conferring heterogeneity and flexibility in this BMC. In Streptococcus intermedius (strain ATCC 27335 / DSM 20573 / CCUG 32759 / CIP 103248 / JCM 12996 / LMG 17840 / NCTC 11324 / SK54 / 1877), this protein is Bacterial microcompartment shell protein CutR.